A 365-amino-acid polypeptide reads, in one-letter code: Phospho-N-acetylmuramoyl-pentapeptide-transferase (365 aa).

Transmembrane regions (helical) follow at residues 22–42 (YISV…LALG), 74–94 (TMGG…WGDL), 95–115 (TSIY…IGFF), 133–153 (YKFA…FYLL), 168–188 (SLYI…IING), 201–221 (GLAI…AYIE), 240–260 (LAEV…FLWF), 267–287 (VFMG…IAVM), 292–312 (LIFF…MLQV), and 342–362 (KVVI…LAAI).

It belongs to the glycosyltransferase 4 family. MraY subfamily. Mg(2+) is required as a cofactor.

It is found in the cell inner membrane. It carries out the reaction UDP-N-acetyl-alpha-D-muramoyl-L-alanyl-gamma-D-glutamyl-meso-2,6-diaminopimeloyl-D-alanyl-D-alanine + di-trans,octa-cis-undecaprenyl phosphate = di-trans,octa-cis-undecaprenyl diphospho-N-acetyl-alpha-D-muramoyl-L-alanyl-D-glutamyl-meso-2,6-diaminopimeloyl-D-alanyl-D-alanine + UMP. It functions in the pathway cell wall biogenesis; peptidoglycan biosynthesis. Functionally, catalyzes the initial step of the lipid cycle reactions in the biosynthesis of the cell wall peptidoglycan: transfers peptidoglycan precursor phospho-MurNAc-pentapeptide from UDP-MurNAc-pentapeptide onto the lipid carrier undecaprenyl phosphate, yielding undecaprenyl-pyrophosphoryl-MurNAc-pentapeptide, known as lipid I. This Francisella tularensis subsp. tularensis (strain FSC 198) protein is Phospho-N-acetylmuramoyl-pentapeptide-transferase.